The primary structure comprises 208 residues: Superoxide dismutase [Mn] (208 aa).

Residues His27, His81, Asp168, and His172 each coordinate Mn(2+).

This sequence belongs to the iron/manganese superoxide dismutase family. In terms of assembly, homodimer. It depends on Mn(2+) as a cofactor.

It carries out the reaction 2 superoxide + 2 H(+) = H2O2 + O2. Destroys superoxide anion radicals which are normally produced within the cells and which are toxic to biological systems. This Buchnera aphidicola subsp. Baizongia pistaciae (strain Bp) protein is Superoxide dismutase [Mn] (sodA).